The primary structure comprises 471 residues: Putative metabolite transport protein YncC (471 aa).

12 helical membrane passes run 13-33, 50-70, 88-108, 111-131, 146-166, 175-195, 256-276, 295-315, 323-343, 358-378, 393-413, and 416-436; these read LIMISATFGGLLFGYDTGVIN, VTEGLVTSILLLGAAFGALLC, FLFFLASLGTALAPNVFIMAV, FLLGLAVGGASAMVPAFLAEM, LMIVGGQFLAYVFNAILGVTM, YMLVICAVPAIMLFASMLKVP, LLWIGIGVAIVNQITGVNSIM, IANIGNGLISVIAVIFGIWLV, ILLIGLAGTTTALLLIAIFSI, LTVLFLAFMQGCVGPVTWLVI, ISVFFLWILNFVIGFAFPILL, and VGLSFTFFIFVALGVLAIGFV.

The protein belongs to the major facilitator superfamily. Sugar transporter (TC 2.A.1.1) family.

It is found in the cell membrane. In Bacillus subtilis (strain 168), this protein is Putative metabolite transport protein YncC (yncC).